We begin with the raw amino-acid sequence, 148 residues long: SsrA-binding protein (148 aa).

This sequence belongs to the SmpB family.

It localises to the cytoplasm. Required for rescue of stalled ribosomes mediated by trans-translation. Binds to transfer-messenger RNA (tmRNA), required for stable association of tmRNA with ribosomes. tmRNA and SmpB together mimic tRNA shape, replacing the anticodon stem-loop with SmpB. tmRNA is encoded by the ssrA gene; the 2 termini fold to resemble tRNA(Ala) and it encodes a 'tag peptide', a short internal open reading frame. During trans-translation Ala-aminoacylated tmRNA acts like a tRNA, entering the A-site of stalled ribosomes, displacing the stalled mRNA. The ribosome then switches to translate the ORF on the tmRNA; the nascent peptide is terminated with the 'tag peptide' encoded by the tmRNA and targeted for degradation. The ribosome is freed to recommence translation, which seems to be the essential function of trans-translation. The chain is SsrA-binding protein from Ehrlichia canis (strain Jake).